The sequence spans 401 residues: Hemorrhagic metalloproteinase-disintegrin-like kaouthiagin (401 aa).

The Peptidase M12B domain occupies 14 to 208 (KYIEFYVIVD…DRPQCILNKP (195 aa)). Ca(2+) contacts are provided by E17 and D101. The N-linked (GlcNAc...) asparagine glycan is linked to N112. Intrachain disulfides connect C125–C203, C164–C187, and C166–C171. Residue H149 coordinates Zn(2+). Residue E150 is part of the active site. The Zn(2+) site is built by H153 and H159. Ca(2+) contacts are provided by C203, N206, I218, N221, F223, E225, E228, and D231. The region spanning 216–285 (PAICGNYFVE…ECPTDSLQRN (70 aa)) is the Disintegrin domain. 11 disulfide bridges follow: C219–C248, C230–C243, C232–C238, C257–C277, C264–C296, C289–C301, C308–C358, C323–C366, C336–C346, C353–C389, and C383–C394. The short motif at 263 to 265 (DCD) is the D/ECD-tripeptide element. 4 residues coordinate Ca(2+): D265, L266, E268, and D280.

It belongs to the venom metalloproteinase (M12B) family. P-III subfamily. P-IIIa sub-subfamily. In terms of assembly, monomer. Requires Zn(2+) as cofactor. Expressed by the venom gland.

The protein resides in the secreted. Snake venom zinc protease that inhibits hemostasis by binding and cleaving the vWF in humans. Also has and inhibitory effect on the collagen-induced platelet aggregation. The polypeptide is Hemorrhagic metalloproteinase-disintegrin-like kaouthiagin (Naja kaouthia (Monocled cobra)).